An 85-amino-acid polypeptide reads, in one-letter code: YcgL domain-containing protein ECA2367 (85 aa).

Residues 1 to 85 (MFCVIYRSVK…PVESLLTTPV (85 aa)) form the YcgL domain.

The sequence is that of YcgL domain-containing protein ECA2367 from Pectobacterium atrosepticum (strain SCRI 1043 / ATCC BAA-672) (Erwinia carotovora subsp. atroseptica).